The following is a 264-amino-acid chain: Glutamate racemase (264 aa).

Residues 10 to 11 (DS) and 42 to 43 (YG) each bind substrate. The active-site Proton donor/acceptor is Cys73. 74–75 (NT) serves as a coordination point for substrate. The active-site Proton donor/acceptor is Cys183. 184 to 185 (TH) is a binding site for substrate.

Belongs to the aspartate/glutamate racemases family.

It catalyses the reaction L-glutamate = D-glutamate. It functions in the pathway cell wall biogenesis; peptidoglycan biosynthesis. Functionally, provides the (R)-glutamate required for cell wall biosynthesis. The chain is Glutamate racemase from Streptococcus pyogenes serotype M18 (strain MGAS8232).